Here is a 436-residue protein sequence, read N- to C-terminus: Serine--tRNA ligase (436 aa).

239–241 (TAE) is an L-serine binding site. An ATP-binding site is contributed by 270–272 (RKE). Position 293 (glutamate 293) interacts with L-serine. 357–360 (EISS) lines the ATP pocket. Serine 392 contributes to the L-serine binding site.

Belongs to the class-II aminoacyl-tRNA synthetase family. Type-1 seryl-tRNA synthetase subfamily. As to quaternary structure, homodimer. The tRNA molecule binds across the dimer.

The protein resides in the cytoplasm. The catalysed reaction is tRNA(Ser) + L-serine + ATP = L-seryl-tRNA(Ser) + AMP + diphosphate + H(+). It carries out the reaction tRNA(Sec) + L-serine + ATP = L-seryl-tRNA(Sec) + AMP + diphosphate + H(+). It participates in aminoacyl-tRNA biosynthesis; selenocysteinyl-tRNA(Sec) biosynthesis; L-seryl-tRNA(Sec) from L-serine and tRNA(Sec): step 1/1. Its function is as follows. Catalyzes the attachment of serine to tRNA(Ser). Is also able to aminoacylate tRNA(Sec) with serine, to form the misacylated tRNA L-seryl-tRNA(Sec), which will be further converted into selenocysteinyl-tRNA(Sec). In Leuconostoc citreum (strain KM20), this protein is Serine--tRNA ligase.